We begin with the raw amino-acid sequence, 197 residues long: UPF0319 protein VP0761 (197 aa).

Positions 1–20 (MKKTTTLLGICAILSAPAFA) are cleaved as a signal peptide.

The protein belongs to the UPF0319 family.

The chain is UPF0319 protein VP0761 from Vibrio parahaemolyticus serotype O3:K6 (strain RIMD 2210633).